A 156-amino-acid polypeptide reads, in one-letter code: Endoribonuclease YbeY (156 aa).

Zn(2+) contacts are provided by His114, His118, and His124.

This sequence belongs to the endoribonuclease YbeY family. Zn(2+) is required as a cofactor.

The protein localises to the cytoplasm. Single strand-specific metallo-endoribonuclease involved in late-stage 70S ribosome quality control and in maturation of the 3' terminus of the 16S rRNA. This Sodalis glossinidius (strain morsitans) protein is Endoribonuclease YbeY.